The chain runs to 76 residues: Theta defensin subunit C (76 aa).

The signal sequence occupies residues 1–22 (MRTFAFLTAMLLLVALHAQAEA). Residues 23–64 (RQARADEAAIQEQPGADDQGMAHSFTRNESAVLPLSESERGL) constitute a propeptide that is removed on maturation. A Cyclopeptide (Arg-Cys) (interchain with C-73 in subunit A); in form BTD-4 cross-link involves residue arginine 65. Cysteine 68 and cysteine 73 are oxidised to a cystine. Cysteine 73 participates in a covalent cross-link: Cyclopeptide (Cys-Arg) (interchain with R-65 in subunit A); in form BTD-4. A propeptide spanning residues 74-76 (RLL) is cleaved from the precursor.

Belongs to the alpha-defensin family. Theta subfamily. As to quaternary structure, BTD-4 is a cyclic heterodimer composed of subunits A and C; disulfide-linked. In terms of processing, forms a cyclic peptide with subunit A (BTD-4). An additional intersubunit disulfide bond is formed.

In terms of biological role, BTD-4 has antimicrobial activity against the Gram-negative bacterium E.coli ML35, the Gram-positive bacterium S.aureus 502a, and the fungus C.albicans 16820. This is Theta defensin subunit C (BTDC) from Papio anubis (Olive baboon).